We begin with the raw amino-acid sequence, 493 residues long: Ketol-acid reductoisomerase (NADP(+)) (493 aa).

A KARI N-terminal Rossmann domain is found at 17 to 208; that stretch reads LSQCRFMDRS…GGDRAGVLHS (192 aa). Residues 45–48, Arg68, Arg76, Ser78, and 108–110 each bind NADP(+); these read CGAQ and DKQ. His132 is a catalytic residue. NADP(+) is bound at residue Gly158. 2 KARI C-terminal knotted domains span residues 209-344 and 345-486; these read SFIA…NAPS and SNEH…MKDM. Mg(2+) contacts are provided by Asp217, Glu221, Glu389, and Glu393. Residue Ser414 participates in substrate binding.

It belongs to the ketol-acid reductoisomerase family. Mg(2+) serves as cofactor.

It carries out the reaction (2R)-2,3-dihydroxy-3-methylbutanoate + NADP(+) = (2S)-2-acetolactate + NADPH + H(+). The catalysed reaction is (2R,3R)-2,3-dihydroxy-3-methylpentanoate + NADP(+) = (S)-2-ethyl-2-hydroxy-3-oxobutanoate + NADPH + H(+). It participates in amino-acid biosynthesis; L-isoleucine biosynthesis; L-isoleucine from 2-oxobutanoate: step 2/4. The protein operates within amino-acid biosynthesis; L-valine biosynthesis; L-valine from pyruvate: step 2/4. In terms of biological role, involved in the biosynthesis of branched-chain amino acids (BCAA). Catalyzes an alkyl-migration followed by a ketol-acid reduction of (S)-2-acetolactate (S2AL) to yield (R)-2,3-dihydroxy-isovalerate. In the isomerase reaction, S2AL is rearranged via a Mg-dependent methyl migration to produce 3-hydroxy-3-methyl-2-ketobutyrate (HMKB). In the reductase reaction, this 2-ketoacid undergoes a metal-dependent reduction by NADPH to yield (R)-2,3-dihydroxy-isovalerate. This chain is Ketol-acid reductoisomerase (NADP(+)), found in Shewanella amazonensis (strain ATCC BAA-1098 / SB2B).